Reading from the N-terminus, the 346-residue chain is Cell division protein FtsZ 2 (346 aa).

GTP is bound by residues 23-27 (GGGGN), 110-112 (GTG), glutamate 141, arginine 145, and aspartate 189. The disordered stretch occupies residues 320-346 (SNRSAQPTAPEAMNGQTAAAVPSRTLQ).

Belongs to the FtsZ family. In terms of assembly, homodimer. Polymerizes to form a dynamic ring structure in a strictly GTP-dependent manner. Interacts directly with several other division proteins.

Its subcellular location is the cytoplasm. Its function is as follows. Essential cell division protein that forms a contractile ring structure (Z ring) at the future cell division site. The regulation of the ring assembly controls the timing and the location of cell division. One of the functions of the FtsZ ring is to recruit other cell division proteins to the septum to produce a new cell wall between the dividing cells. Binds GTP and shows GTPase activity. The protein is Cell division protein FtsZ 2 of Rhizobium meliloti (strain 1021) (Ensifer meliloti).